The following is a 357-amino-acid chain: Decorin (357 aa).

Positions 1 to 16 are cleaved as a signal peptide; the sequence is MRLVLLFVLLLPVCLA. A propeptide spanning residues 17 to 30 is cleaved from the precursor; that stretch reads TRFHQKGLFDFMIE. O-linked (Xyl...) (glycosaminoglycan) serine glycosylation is present at serine 46. Cystine bridges form between cysteine 52–cysteine 58 and cysteine 56–cysteine 65. 12 LRR repeats span residues 71–91, 92–115, 116–139, 140–160, 161–184, 185–210, 211–231, 232–255, 256–279, 280–302, 303–332, and 333–357; these read ERVP…NNKI, TEIK…NNKI, SKIS…KNNL, KELP…ENEI, SKLR…TNPL, KSSG…DTNI, TSIP…GNKI, SKID…FNSI, SSVE…NNEL, VRVP…NNKI, ASIG…SNPV, and QYWE…GNYK. N-linked (GlcNAc...) asparagine glycosylation is present at asparagine 209. The N-linked (GlcNAc...) asparagine glycan is linked to asparagine 260. Residues cysteine 311 and cysteine 344 are joined by a disulfide bond.

It belongs to the small leucine-rich proteoglycan (SLRP) family. SLRP class I subfamily. As to quaternary structure, binds to type I and type II collagen, to fibronectin and TGF-beta. Forms a ternary complex with MFAP2 and ELN. Post-translationally, the attached glycosaminoglycan chain can be either chondroitin sulfate or dermatan sulfate depending upon the tissue of origin.

The protein resides in the secreted. Its subcellular location is the extracellular space. It localises to the extracellular matrix. Its function is as follows. May affect the rate of fibrils formation. The chain is Decorin (DCN) from Gallus gallus (Chicken).